We begin with the raw amino-acid sequence, 260 residues long: Enoyl-[acyl-carrier-protein] reductase [NADH] FabI (260 aa).

NAD(+) contacts are provided by residues G15, 21-22 (SI), Q42, 66-67 (DV), and M94. Substrate is bound at residue A97. Residues Y147 and Y157 each act as proton acceptor in the active site. NAD(+)-binding positions include K164 and 193–197 (IKTLA).

The protein belongs to the short-chain dehydrogenases/reductases (SDR) family. FabI subfamily. Homotetramer.

It catalyses the reaction a 2,3-saturated acyl-[ACP] + NAD(+) = a (2E)-enoyl-[ACP] + NADH + H(+). It functions in the pathway lipid metabolism; fatty acid biosynthesis. Catalyzes the reduction of a carbon-carbon double bond in an enoyl moiety that is covalently linked to an acyl carrier protein (ACP). Involved in the elongation cycle of fatty acid which are used in the lipid metabolism. The sequence is that of Enoyl-[acyl-carrier-protein] reductase [NADH] FabI (fabI) from Rickettsia conorii (strain ATCC VR-613 / Malish 7).